Here is a 183-residue protein sequence, read N- to C-terminus: Neuronal synaptobrevin (183 aa).

Low complexity predominate over residues 1-17 (MADAAPAGDAPPNAGAP). The segment at 1 to 32 (MADAAPAGDAPPNAGAPAGEGGDGEIVGGPHN) is disordered. Topologically, residues 1 to 106 (MADAAPAGDA…KFWLQNLKMM (106 aa)) are cytoplasmic. The span at 18–27 (AGEGGDGEIV) shows a compositional bias: gly residues. In terms of domain architecture, v-SNARE coiled-coil homology spans 41–101 (RLQQTQAQVD…GKLKRKFWLQ (61 aa)). Residues 107–127 (IIMGVIGLVVVGIIANKLGLI) form a helical membrane-spanning segment. Topologically, residues 128–183 (GGEQPPQYQYPPQYMQPPPPPPQQPAGGQSSLVDAAGAGDGAGAGGSAGAGDHGGV) are vesicular. A disordered region spans residues 135–183 (YQYPPQYMQPPPPPPQQPAGGQSSLVDAAGAGDGAGAGGSAGAGDHGGV). A compositionally biased stretch (pro residues) spans 141–151 (YMQPPPPPPQQ). Residues 165-183 (AGDGAGAGGSAGAGDHGGV) show a composition bias toward gly residues.

This sequence belongs to the synaptobrevin family. In terms of assembly, part of the SNARE core complex containing Snap25 and syntaxin. Specifically expressed in neurons and synapses.

The protein resides in the cytoplasmic vesicle. It localises to the secretory vesicle. It is found in the synaptic vesicle membrane. Its subcellular location is the early endosome membrane. Functionally, involved in the targeting and/or fusion of transport vesicles to their target membrane. Major SNARE protein of synaptic vesicles which mediates fusion of synaptic vesicles to release neurotransmitters. Essential for fast vesicular exocytosis and activity-dependent neurotransmitter release as well as fast endocytosis that mediates rapid reuse of synaptic vesicles. Also involved in a neuron-specific sort-and-degrade mechanism that promotes endolysosomal degradation and is required for neuronal maintenance. In Drosophila melanogaster (Fruit fly), this protein is Neuronal synaptobrevin.